The following is a 382-amino-acid chain: Queuine tRNA-ribosyltransferase (382 aa).

Residue D93 is the Proton acceptor of the active site. Substrate contacts are provided by residues 93-97 (DSGGF), D147, Q191, and G218. An RNA binding region spans residues 249 to 255 (GVGKPED). The active-site Nucleophile is the D268. The segment at 273–277 (TRNAR) is RNA binding; important for wobble base 34 recognition. Positions 306, 308, 311, and 337 each coordinate Zn(2+).

The protein belongs to the queuine tRNA-ribosyltransferase family. In terms of assembly, homodimer. Within each dimer, one monomer is responsible for RNA recognition and catalysis, while the other monomer binds to the replacement base PreQ1. It depends on Zn(2+) as a cofactor.

It catalyses the reaction 7-aminomethyl-7-carbaguanine + guanosine(34) in tRNA = 7-aminomethyl-7-carbaguanosine(34) in tRNA + guanine. The protein operates within tRNA modification; tRNA-queuosine biosynthesis. Catalyzes the base-exchange of a guanine (G) residue with the queuine precursor 7-aminomethyl-7-deazaguanine (PreQ1) at position 34 (anticodon wobble position) in tRNAs with GU(N) anticodons (tRNA-Asp, -Asn, -His and -Tyr). Catalysis occurs through a double-displacement mechanism. The nucleophile active site attacks the C1' of nucleotide 34 to detach the guanine base from the RNA, forming a covalent enzyme-RNA intermediate. The proton acceptor active site deprotonates the incoming PreQ1, allowing a nucleophilic attack on the C1' of the ribose to form the product. After dissociation, two additional enzymatic reactions on the tRNA convert PreQ1 to queuine (Q), resulting in the hypermodified nucleoside queuosine (7-(((4,5-cis-dihydroxy-2-cyclopenten-1-yl)amino)methyl)-7-deazaguanosine). This is Queuine tRNA-ribosyltransferase from Actinobacillus pleuropneumoniae serotype 5b (strain L20).